We begin with the raw amino-acid sequence, 314 residues long: ATP synthase gamma chain (314 aa).

The protein belongs to the ATPase gamma chain family. F-type ATPases have 2 components, CF(1) - the catalytic core - and CF(0) - the membrane proton channel. CF(1) has five subunits: alpha(3), beta(3), gamma(1), delta(1), epsilon(1). CF(0) has three main subunits: a, b and c.

Its subcellular location is the cellular thylakoid membrane. Its function is as follows. Produces ATP from ADP in the presence of a proton gradient across the membrane. The gamma chain is believed to be important in regulating ATPase activity and the flow of protons through the CF(0) complex. The protein is ATP synthase gamma chain of Crocosphaera subtropica (strain ATCC 51142 / BH68) (Cyanothece sp. (strain ATCC 51142)).